Reading from the N-terminus, the 239-residue chain is Large ribosomal subunit protein uL3 (239 aa).

Disordered regions lie at residues 140 to 166 (SHRSIGSTGGRQDPGKTWKNKKMPGHM) and 211 to 239 (PLPKEAPKPGKFKVAGEQAAEAPAVQEGA). Glutamine 151 bears the N5-methylglutamine mark.

This sequence belongs to the universal ribosomal protein uL3 family. In terms of assembly, part of the 50S ribosomal subunit. Forms a cluster with proteins L14 and L19. Methylated by PrmB.

Its function is as follows. One of the primary rRNA binding proteins, it binds directly near the 3'-end of the 23S rRNA, where it nucleates assembly of the 50S subunit. This Bradyrhizobium sp. (strain BTAi1 / ATCC BAA-1182) protein is Large ribosomal subunit protein uL3.